The sequence spans 200 residues: Imidazoleglycerol-phosphate dehydratase (200 aa).

The protein belongs to the imidazoleglycerol-phosphate dehydratase family.

It is found in the cytoplasm. It catalyses the reaction D-erythro-1-(imidazol-4-yl)glycerol 3-phosphate = 3-(imidazol-4-yl)-2-oxopropyl phosphate + H2O. Its pathway is amino-acid biosynthesis; L-histidine biosynthesis; L-histidine from 5-phospho-alpha-D-ribose 1-diphosphate: step 6/9. The polypeptide is Imidazoleglycerol-phosphate dehydratase (Renibacterium salmoninarum (strain ATCC 33209 / DSM 20767 / JCM 11484 / NBRC 15589 / NCIMB 2235)).